A 51-amino-acid polypeptide reads, in one-letter code: Large ribosomal subunit protein bL33 (51 aa).

Belongs to the bacterial ribosomal protein bL33 family.

This chain is Large ribosomal subunit protein bL33, found in Psychrobacter sp. (strain PRwf-1).